Consider the following 868-residue polypeptide: DNA topoisomerase 1 (868 aa).

One can recognise a Toprim domain in the interval 3 to 147; the sequence is KSLVIVESPA…RYKRVVFNEI (145 aa). Mg(2+) is bound at residue Glu-9. The segment at 34 to 70 is disordered; that stretch reads IRDLPTSGSSSSKEPAAKGRKSASEAPALSPKEKARR. Asp-116 contacts Mg(2+). The Topo IA-type catalytic domain occupies 163 to 580; that stretch reads DINRVNAQQA…EFYGDFKKKL (418 aa). Residues 197–202 form an interaction with DNA region; sequence SAGRVQ. The O-(5'-phospho-DNA)-tyrosine intermediate role is filled by Tyr-324. 3 consecutive C4-type zinc fingers follow at residues 602–633, 664–691, and 713–738; these read CRECGRPMMIRTASTGVFLGCSGYSLPPKERC, CPICSTAMDAYLLDEKHKLHICGNNPDC, and CDKCGSEMQLKTGRFGKFFGCTNPTC.

It belongs to the type IA topoisomerase family. As to quaternary structure, monomer. The cofactor is Mg(2+).

It catalyses the reaction ATP-independent breakage of single-stranded DNA, followed by passage and rejoining.. Releases the supercoiling and torsional tension of DNA, which is introduced during the DNA replication and transcription, by transiently cleaving and rejoining one strand of the DNA duplex. Introduces a single-strand break via transesterification at a target site in duplex DNA. The scissile phosphodiester is attacked by the catalytic tyrosine of the enzyme, resulting in the formation of a DNA-(5'-phosphotyrosyl)-enzyme intermediate and the expulsion of a 3'-OH DNA strand. The free DNA strand then undergoes passage around the unbroken strand, thus removing DNA supercoils. Finally, in the religation step, the DNA 3'-OH attacks the covalent intermediate to expel the active-site tyrosine and restore the DNA phosphodiester backbone. The protein is DNA topoisomerase 1 of Pseudomonas aeruginosa (strain ATCC 15692 / DSM 22644 / CIP 104116 / JCM 14847 / LMG 12228 / 1C / PRS 101 / PAO1).